We begin with the raw amino-acid sequence, 65 residues long: Large ribosomal subunit protein uL29 (65 aa).

This sequence belongs to the universal ribosomal protein uL29 family.

The protein is Large ribosomal subunit protein uL29 of Lactobacillus delbrueckii subsp. bulgaricus (strain ATCC 11842 / DSM 20081 / BCRC 10696 / JCM 1002 / NBRC 13953 / NCIMB 11778 / NCTC 12712 / WDCM 00102 / Lb 14).